The sequence spans 499 residues: Dual specificity protein kinase CLK2 (499 aa).

Residues 1 to 65 are disordered; it reads MPHPRRYHSS…RSSYDDHSSD (65 aa). The span at 8 to 23 shows a compositional bias: basic and acidic residues; sequence HSSERGSRGSYHEHYQ. A compositionally biased stretch (basic residues) spans 24–33; sequence SRKHKRRRSR. S34 is modified (phosphoserine; by PKB/AKT1). Positions 47–65 are enriched in basic and acidic residues; sequence REDSYHVRSRSSYDDHSSD. Residue S98 is modified to Phosphoserine; by autocatalysis. A Phosphotyrosine; by autocatalysis modification is found at Y99. The segment at 102–142 is disordered; the sequence is HRENSSYRSQRSSRRKHRRRRRRSRTFSRSSSHSSRRAKSV. The segment covering 112–127 has biased composition (basic residues); the sequence is RSSRRKHRRRRRRSRT. T127 is subject to Phosphothreonine; by PKB/AKT1. S141 is subject to Phosphoserine; by autocatalysis. Y152 is subject to Phosphotyrosine. One can recognise a Protein kinase domain in the interval 163–479; it reads EIVSTLGEGT…GEALQHPFFA (317 aa). ATP contacts are provided by residues 168–176 and K192; that span reads LGEGTFGRV. The active-site Proton acceptor is D289. The residue at position 343 (T343) is a Phosphothreonine; by PKB/AKT2.

Belongs to the protein kinase superfamily. CMGC Ser/Thr protein kinase family. Lammer subfamily. Interacts with RBMX and UBL5. Interacts with AKT1. Autophosphorylates on all three types of residues. Phosphorylation on Ser-34 and Thr-127 by AKT1 is induced by ionizing radiation or insulin. Phosphorylation plays a critical role in cell proliferation following low dose radiation and prevents cell death following high dose radiation. Phosphorylation at Thr-343 by PKB/AKT2 induces its kinase activity which is required for its stability. The phosphorylation status at Ser-141 influences its subnuclear localization; inhibition of phosphorylation at Ser-141 results in accumulation in the nuclear speckle.

Its subcellular location is the nucleus. The protein localises to the nucleus speckle. It catalyses the reaction L-seryl-[protein] + ATP = O-phospho-L-seryl-[protein] + ADP + H(+). It carries out the reaction L-threonyl-[protein] + ATP = O-phospho-L-threonyl-[protein] + ADP + H(+). The catalysed reaction is L-tyrosyl-[protein] + ATP = O-phospho-L-tyrosyl-[protein] + ADP + H(+). Its activity is regulated as follows. 5,6-dichloro-1-b-D-ribofuranosylbenzimidazole (DRB) inhibits autophosphorylation. TG003 inhibits its kinase activity and affects the regulation of alternative splicing mediated by phosphorylation of SR proteins. Dual specificity kinase acting on both serine/threonine and tyrosine-containing substrates. Phosphorylates serine- and arginine-rich (SR) proteins of the spliceosomal complex. May be a constituent of a network of regulatory mechanisms that enable SR proteins to control RNA splicing and can cause redistribution of SR proteins from speckles to a diffuse nucleoplasmic distribution. Acts as a suppressor of hepatic gluconeogenesis and glucose output by repressing PPARGC1A transcriptional activity on gluconeogenic genes via its phosphorylation. Phosphorylates PPP2R5B thereby stimulating the assembly of PP2A phosphatase with the PPP2R5B-AKT1 complex leading to dephosphorylation of AKT1. Phosphorylates: PTPN1, SRSF1 and SRSF3. Regulates the alternative splicing of tissue factor (F3) pre-mRNA in endothelial cells. Phosphorylates PAGE4 at several serine and threonine residues and this phosphorylation attenuates the ability of PAGE4 to potentiate the transcriptional activator activity of JUN. In Mus musculus (Mouse), this protein is Dual specificity protein kinase CLK2 (Clk2).